A 1088-amino-acid chain; its full sequence is Calcium-transporting ATPase 5, plasma membrane-type (1088 aa).

A compositionally biased stretch (low complexity) spans 1 to 11 (MESASSSLATS). The tract at residues 1 to 32 (MESASSSLATSGRRRSSSGGGGGSWGSIGSAA) is disordered. Residues 1-198 (MESASSSLAT…FLWDACKDLT (198 aa)) are Cytoplasmic-facing. A helical transmembrane segment spans residues 199-219 (LIILMVAAAVSLALGITTEGI). Over 220–221 (KE) the chain is Extracellular. Residues 222-242 (GWYDGASIAFAVLLVVVVTAT) traverse the membrane as a helical segment. Topologically, residues 243-338 (SDYKQSLQFQ…MSGCKVADGY (96 aa)) are cytoplasmic. Residues 339–359 (GTMLVTAVGINTEWGLLMASI) form a helical membrane-spanning segment. Over 360 to 375 (SEDSGEETPLQVRLNG) the chain is Extracellular. A helical transmembrane segment spans residues 376–396 (VATFIGMVGLSVALAVLVVLL). The Cytoplasmic portion of the chain corresponds to 397-425 (ARYFTGHTYNPDGSVQYVKGKMGVGQTIR). Residues 426 to 446 (GIVGIFTVAVTIVVVAVPEGL) form a helical membrane-spanning segment. The Extracellular segment spans residues 447-851 (PLAVTLTLAF…GRSVYANIQK (405 aa)). Asp486 (4-aspartylphosphate intermediate) is an active-site residue. 3 N-linked (GlcNAc...) asparagine glycosylation sites follow: Asn532, Asn569, and Asn737. Mg(2+) contacts are provided by Asp794 and Asp798. Residues 852–872 (FIQFQLTVNVAALIINVVAAV) form a helical membrane-spanning segment. At 873–880 (SSGNVPLN) the chain is on the cytoplasmic side. Residues 881-901 (AVQLLWVNLIMDTLGALALAT) traverse the membrane as a helical segment. The Extracellular portion of the chain corresponds to 902 to 919 (EPPTDHLMQRPPVGRREP). A helical membrane pass occupies residues 920 to 940 (LITNVMWRNLIIMALFQVIVL). Residues 941–1000 (LTLNFRGTSLLQLKNDNQAHADKVKNTFIFNTFVLCQVFNEFNARKPDELNIFKGITGNH) are Cytoplasmic-facing. A helical membrane pass occupies residues 1001-1021 (LFMAIVAITVVLQALIVEFLG). Residues 1022–1030 (KFTSTTRLT) lie on the Extracellular side of the membrane. Residues 1031–1051 (WQLWLVSIGLAFFSWPLAFVG) traverse the membrane as a helical segment. Residues 1052–1088 (KLIPVPERPLGDFFACCCPGSKQAADAKGDDADHSDV) lie on the Cytoplasmic side of the membrane.

Belongs to the cation transport ATPase (P-type) (TC 3.A.3) family. Type IIB subfamily. Interacts with NOH1.

It localises to the cell membrane. It catalyses the reaction Ca(2+)(in) + ATP + H2O = Ca(2+)(out) + ADP + phosphate + H(+). Activated by calmodulin. This magnesium-dependent enzyme catalyzes the hydrolysis of ATP coupled with the translocation of calcium from the cytosol out of the cell, into the endoplasmic reticulum, or into organelles. Involved in salt and drought stress tolerance. Involved in cold stress tolerance. In Oryza sativa subsp. japonica (Rice), this protein is Calcium-transporting ATPase 5, plasma membrane-type.